The primary structure comprises 245 residues: tRNA1(Val) (adenine(37)-N6)-methyltransferase (245 aa).

This sequence belongs to the methyltransferase superfamily. tRNA (adenine-N(6)-)-methyltransferase family.

It is found in the cytoplasm. It carries out the reaction adenosine(37) in tRNA1(Val) + S-adenosyl-L-methionine = N(6)-methyladenosine(37) in tRNA1(Val) + S-adenosyl-L-homocysteine + H(+). In terms of biological role, specifically methylates the adenine in position 37 of tRNA(1)(Val) (anticodon cmo5UAC). The sequence is that of tRNA1(Val) (adenine(37)-N6)-methyltransferase from Klebsiella pneumoniae subsp. pneumoniae (strain ATCC 700721 / MGH 78578).